Here is a 334-residue protein sequence, read N- to C-terminus: uncharacterized protein (334 aa).

WD repeat units lie at residues 56–86, 98–128, 139–169, 220–250, and 262–291; these read LKGE…KLWT, KPVA…RIWD, GHTS…EGWS, TDQG…RVFN, and LDDG…RVWN.

This is an uncharacterized protein from Synechocystis sp. (strain ATCC 27184 / PCC 6803 / Kazusa).